A 326-amino-acid polypeptide reads, in one-letter code: Apoptosis facilitator Bcl-2-like protein 14 (326 aa).

Residue Ser-44 is modified to Phosphoserine. Positions 99–127 (TEKEEEPPSSPKEIHAQGPFPVERQGRNQ) are disordered. The BH3 signature appears at 211-225 (IVELLKYSGDQLGRE). Residues 307-314 (WVQQNGGW) carry the BH2 motif.

The protein belongs to the Bcl-2 family. In terms of processing, phosphorylated by MELK, leading to inhibit its pro-apoptotic function.

The protein resides in the cytoplasm. Plays a role in apoptosis. This chain is Apoptosis facilitator Bcl-2-like protein 14 (Bcl2l14), found in Rattus norvegicus (Rat).